A 234-amino-acid chain; its full sequence is MSTSWPPRTVIRKASGLRTLELTLDRVGLGPVAGVDEAGRGACAGPLVIAACVLGSNQRKSLAALNDSKKLTEKMRETLFPLICRYAEAYHVVSVPADEVDRIGVHVANIEGMRRAVAGLGVKPGYVLTDGFRVPGLPVPSLPVIGGDASAACIAAASVLAKVSRDRVMVNMDSDHPGYGFAVHKGYSTAVHTEALRRLGPSAQHRQSFVNVRNAAMGSSLMRPLAPRESDTGG.

In terms of domain architecture, RNase H type-2 spans 30–221 (GPVAGVDEAG…VRNAAMGSSL (192 aa)). A divalent metal cation-binding residues include Asp36, Glu37, and Asp130.

The protein belongs to the RNase HII family. Requires Mn(2+) as cofactor. The cofactor is Mg(2+).

It is found in the cytoplasm. The catalysed reaction is Endonucleolytic cleavage to 5'-phosphomonoester.. Its function is as follows. Endonuclease that specifically degrades the RNA of RNA-DNA hybrids. The polypeptide is Ribonuclease HII (Mycobacteroides abscessus (strain ATCC 19977 / DSM 44196 / CCUG 20993 / CIP 104536 / JCM 13569 / NCTC 13031 / TMC 1543 / L948) (Mycobacterium abscessus)).